The sequence spans 851 residues: Transforming growth factor beta receptor type 3 (851 aa).

Positions Met-1–Ala-20 are cleaved as a signal peptide. Topologically, residues Gly-21–Val-787 are extracellular. Residues Cys-52 and Cys-197 are joined by a disulfide bond. Residues Asn-141 and Asn-492 are each glycosylated (N-linked (GlcNAc...) asparagine). The ZP domain maps to Lys-455–Cys-730. 2 O-linked (Xyl...) (glycosaminoglycan) serine glycosylation sites follow: Ser-534 and Ser-545. Residues Asn-571, Asn-590, and Asn-697 are each glycosylated (N-linked (GlcNAc...) asparagine). 3 cysteine pairs are disulfide-bonded: Cys-639-Cys-705, Cys-660-Cys-730, and Cys-710-Cys-723. The interaction with TGF-beta ligand stretch occupies residues Ile-737–Pro-751. A helical membrane pass occupies residues Met-788–Tyr-809. Topologically, residues Ser-810–Ala-851 are cytoplasmic. Residues Ala-816–Ala-851 are disordered. The span at Gly-817–Ala-834 shows a compositional bias: polar residues. The segment covering Ser-836 to Ala-851 has biased composition (low complexity). Thr-840 is subject to Phosphothreonine.

In terms of assembly, forms homodimers and homooligomers. Interacts with DYNLT4. Interacts with integrin ITGA5:ITGB1; this interaction promotes the internalization and trafficking of ITGA5:ITGB1 into endocytic vesicles. Interacts with TGFB1, BMP2, BMP5, BMP7 or GDF5 and inhibin A via the ligand binding domains. Interacts with ALK3/BMPR1A; this interaction results in the cell surface retention of BMPR1A. Interacts with ALK6/BMPR1B; this interaction enhances BMPR1B-mediated stimulation of the BMP signaling pathway. Interacts with the scaffolding protein beta-arrestin2/ARRB2; this interaction mediates internalization of TGFBR3 and thus regulates migration, actin cytoskeleton and activation of CDC42. As to quaternary structure, (Microbial infection) Interacts with human cytomegalovirus trimer complex composed of gH, gL, and gO; these interactions may promote HCMV cell entry in specific cell types. Post-translationally, extensively modified by glycosaminoglycan groups (GAG). In terms of processing, phosphorylated in the cytoplasmic domain by the type II receptor TGFBR2 at THR-840 to mediate recruitment of ARRB2 and subsequent internalization of TGFBR2 and TGFBR3.

The protein resides in the cell membrane. Its subcellular location is the secreted. The protein localises to the extracellular space. It localises to the extracellular matrix. In terms of biological role, cell surface receptor that regulates diverse cellular processes including cell proliferation, differentiation, migration, and apoptosis. Initiates BMP, inhibin, and TGF-beta signaling pathways by interacting with different ligands including TGFB1, BMP2, BMP5, BMP7 or GDF5. Alternatively, acts as a cell surface coreceptor for BMP ligands, serving to enhance ligand binding by differentially regulating BMPR1A/ALK3 and BMPR1B/ALK6 receptor trafficking. Promotes epithelial cell adhesion, focal adhesion formation and integrin signaling during epithelial cell spreading on fibronectin. By interacting with the scaffolding protein beta-arrestin2/ARRB2, regulates migration or actin cytoskeleton and promotes the activation of CDC42 as well as the inhibition of NF-kappa-B. In gonadotrope cells, acts as an inhibin A coreceptor and regulates follicle-stimulating hormone (FSH) levels and female fertility. Plays a role in the inhibition of directed and random cell migration in epithelial cells by altering the actin cytoskeletal organization. Participates in epithelial-mesenchymal transformation (EMT) upon binding to BMP2 or TGFB2, by activating the PAR6/SMURF1/RHOA pathway. (Microbial infection) May act as a receptor for human cytomegalovirus in different cell types by interacting with HCMV trimer composed of GO, GH and GL. The protein is Transforming growth factor beta receptor type 3 of Homo sapiens (Human).